We begin with the raw amino-acid sequence, 186 residues long: Membrane protein Rv1476 (186 aa).

A helical membrane pass occupies residues 138 to 158 (FPWSALTIVLLIGVLAAAVGA). Residues 166-186 (RRSATSTDAAPGAGDDLNQGV) form a disordered region.

The protein localises to the membrane. Its function is as follows. May affect the expression of genes linked to host macrophage apoptosis and immune response, thereby promoting the survival of M.tuberculosis in host macrophages. Overexpression of the gene increases susceptibility of the bacteria to various stresses, but promotes intracellular survival in host macrophages. It has no impact on the growth rate in vitro. Overexpression causes changes in the transcriptome of THP-1 cells, including expression of genes involved in cell proliferation, fatty acid degradation, cytokine-cytokine receptor interaction and immune response pathways. The sequence is that of Membrane protein Rv1476 from Mycobacterium tuberculosis (strain ATCC 25618 / H37Rv).